The chain runs to 915 residues: Alanine--tRNA ligase (915 aa).

Residues His605, His609, Cys709, and His713 each coordinate Zn(2+). A disordered region spans residues 882–901; the sequence is GGGGDERLAQGGGRNPDGLT.

The protein belongs to the class-II aminoacyl-tRNA synthetase family. Zn(2+) serves as cofactor.

It is found in the cytoplasm. The enzyme catalyses tRNA(Ala) + L-alanine + ATP = L-alanyl-tRNA(Ala) + AMP + diphosphate. Its function is as follows. Catalyzes the attachment of alanine to tRNA(Ala) in a two-step reaction: alanine is first activated by ATP to form Ala-AMP and then transferred to the acceptor end of tRNA(Ala). Also edits incorrectly charged Ser-tRNA(Ala) and Gly-tRNA(Ala) via its editing domain. This chain is Alanine--tRNA ligase, found in Methanopyrus kandleri (strain AV19 / DSM 6324 / JCM 9639 / NBRC 100938).